The chain runs to 227 residues: Octanoyltransferase (227 aa).

Residues 35 to 210 (DKTPDEIWLV…TFLQLVGYSA (176 aa)) form the BPL/LPL catalytic domain. Substrate is bound by residues 74 to 81 (RGGQVTYH), 141 to 143 (SLG), and 154 to 156 (GLA). The active-site Acyl-thioester intermediate is Cys172.

This sequence belongs to the LipB family.

Its subcellular location is the cytoplasm. It carries out the reaction octanoyl-[ACP] + L-lysyl-[protein] = N(6)-octanoyl-L-lysyl-[protein] + holo-[ACP] + H(+). Its pathway is protein modification; protein lipoylation via endogenous pathway; protein N(6)-(lipoyl)lysine from octanoyl-[acyl-carrier-protein]: step 1/2. Catalyzes the transfer of endogenously produced octanoic acid from octanoyl-acyl-carrier-protein onto the lipoyl domains of lipoate-dependent enzymes. Lipoyl-ACP can also act as a substrate although octanoyl-ACP is likely to be the physiological substrate. The protein is Octanoyltransferase of Pectobacterium atrosepticum (strain SCRI 1043 / ATCC BAA-672) (Erwinia carotovora subsp. atroseptica).